The primary structure comprises 860 residues: SH2 domain-containing protein 3C (860 aa).

Ser22 carries the post-translational modification Phosphoserine. 2 disordered regions span residues Glu51–Leu117 and Pro130–Gly180. Residues Glu162–Gly175 are compositionally biased toward basic and acidic residues. An SH2 domain is found at Trp220–Val319. Residues Tyr278 and Tyr283 each carry the phosphotyrosine modification. The disordered stretch occupies residues Gly335–Asp537. Position 359 is a phosphoserine (Ser359). Low complexity-rich tracts occupy residues Ser405 to Ser420, Ala427 to Ala443, and Ser479 to Pro490. Ser440 carries the phosphoserine modification. In terms of domain architecture, Ras-GEF spans Asp586–Ala854. Tyr793 bears the Phosphotyrosine mark.

In terms of assembly, component of a complex comprised of SH2D3C, BCAR1/CAS, and CRK. Within the complex, interacts with CRK and (via C-terminus) with BCAR1/CAS (via C-terminus). Interacts with NEDD9/HEF1. Interacts with EPHB2. Interacts with NEDD9/HEF1. Interacts with BCAR1/CAS. Interacts with PTK2B. As to quaternary structure, interacts (via C-terminus) with BCAR1/CAS (via C-terminus). Interacts with IGF1. Post-translationally, phosphorylated by MAPK/ERK upon T-cell receptor stimulation in T-cells. In terms of tissue distribution, ubiquitously expressed.

It is found in the cytoplasm. It localises to the cell membrane. Its subcellular location is the cell projection. The protein localises to the axon. The protein resides in the ruffle membrane. Functionally, acts as an adapter protein that mediates cell signaling pathways involved in cellular functions such as cell adhesion and migration, tissue organization, and the regulation of the immune response. Plays a role in integrin-mediated cell adhesion through BCAR1-CRK-RAPGEF1 signaling and activation of the small GTPase RAP1. Promotes cell migration and invasion through the extracellular matrix. Required for marginal zone B-cell development and thymus-independent type 2 immune responses. Mediates migration and adhesion of B cells in the splenic marginal zone via promoting hyperphosphorylation of NEDD9/CASL. Plays a role in CXCL13-induced chemotaxis of B-cells. Plays a role in the migration of olfactory sensory neurons (OSNs) into the forebrain and the innervation of the olfactory bulb by the OSN axons during development. Required for the efficient tyrosine phosphorylation of BCAR1 in OSN axons. Its function is as follows. Important regulator of chemokine-induced, integrin-mediated T lymphocyte adhesion and migration, acting upstream of RAP1. Required for tissue-specific adhesion of T lymphocytes to peripheral tissues. Required for basal and CXCL2 stimulated serine-threonine phosphorylation of NEDD9. May be involved in the regulation of T-cell receptor-mediated IL2 production through the activation of the JNK pathway in T-cells. May be involved in the BCAR1/CAS-mediated JNK activation pathway. The chain is SH2 domain-containing protein 3C (SH2D3C) from Homo sapiens (Human).